The primary structure comprises 319 residues: MMEEIPASYFKIEEFQFESGEKIQEAPVEYRTTGKPSLDDMGVIDNAVIYIHGWSGDCSSVRRIAALTEPGGALENFFVISISSLGSPGSASPSTTAMGKDFPEYTILDMVNFQRQFLDEKFGIRKVRGVIGTSMGGFQALQWAAEYPDEMEFLIPLVTSWQVRGINYALFSYMNHLIEGDPEFRAGTRPERALSLASMLMYLHGLSREYYQGLENAELESSMMDMGSEGALMDPYDVIWRNRAAMKHDLSGKLESIRARTLIFGVNQDRYFPPELDTIPMAQLIPKAELVLFDSECGHLGVNEIGKYNEIIVSFIGGD.

An AB hydrolase-1 domain is found at 46–301 (NAVIYIHGWS…LFDSECGHLG (256 aa)). D269 is a catalytic residue.

It belongs to the AB hydrolase superfamily. MetX family. As to quaternary structure, homodimer.

It is found in the cytoplasm. This Methanothermobacter thermautotrophicus (strain ATCC 29096 / DSM 1053 / JCM 10044 / NBRC 100330 / Delta H) (Methanobacterium thermoautotrophicum) protein is Probable acyltransferase (metX).